A 947-amino-acid chain; its full sequence is MVKDEFFLDHPGRKHRSRNTEKKKKPRRRERRMKQLVCIKSPWNRFKGIMLQLRLLLEVTINPNDNKLKPDSQGEKSRDGDSISKKGSRYVPSFLPPPLASKGKGPENKRDEERSKEMEKGKTRNIDHFVEELKREQEIRERRNQDRENSRDHNSDNTSSSRFDELPDYFDPSGRLGSLDDGDPQTTNLYVVNLSSKVDENFLLRTFGRFGPIASVKIMWPRTEEEKRRERHCGFVAFMNRADGEAAKEKMQGIIVYEYELKIGWGKVVFLPSQALPAPPPGHMAIRSKEGCNLIFSVTSGPPMNSVPNQNSELVLTPNVPDITVISPEDEHLKQIIDTMALNVLDGGCAFEQAIMERGRGNPLFNFLFELGSKEHTYYVWRLYSFAQGDTLQRWRTEPYIMIAGSGRWIPPPLPATRSPEHGKESRGTYAAGKSRCTEAEQTLTDSQRDEFEDMLRALTLERSQIREAMGFALDNAEAAGEVVEVLTESLTLKETSIPTKVARLMLVSDIIHNSSARVKNASAYRTKFEATLPDIMESFNDLYHSVHGRITAEALRERVLKVLQVWADWFLFSDAYINGLRATFLRSRNFGVTSFHSICGDAPDIEKKGLIGNMNDADKINQDAALAMGEGAARQELMNRPISELERRCRHNGLSLLGGREMMVARLVCLKDAEKQRGYEVVDENAKYRQGHSTWEEVNIEPKRMKTSYDKVETEEPVDLASTIPIPQPELKAFVKKEKIDLILPTSRWAREDDETDDEQKKSYSSGSDNAGGITFKTDEEDLKADPSVRVQPENEIDVEQRQKLRHIEIALIEYRESLEEQGMKNSEEIERKVAIHRKRLEADGLSGNQRVLPEKREKREDSRDSSRKRNRSESQNRSQSPPQKSLTRERVRDHDLDKDRHRDRDRQQHDLDKDRKRRAKSSSRERDDHDRSRERDRDWRRRGMR.

A compositionally biased stretch (basic and acidic residues) spans 1 to 11 (MVKDEFFLDHP). 2 disordered regions span residues 1-35 (MVKDEFFLDHPGRKHRSRNTEKKKKPRRRERRMKQ) and 63-167 (PNDN…DELP). Residues 12–34 (GRKHRSRNTEKKKKPRRRERRMK) show a composition bias toward basic residues. Basic and acidic residues-rich tracts occupy residues 66-84 (NKLKPDSQGEKSRDGDSIS) and 104-155 (KGPE…DHNS). In terms of domain architecture, RRM spans 187 to 268 (TNLYVVNLSS…YELKIGWGKV (82 aa)). One copy of the SURP motif repeat lies at 336–379 (IIDTMALNVLDGGCAFEQAIMERGRGNPLFNFLFELGSKEHTYY). The disordered stretch occupies residues 412-434 (PPLPATRSPEHGKESRGTYAAGK). The 146-residue stretch at 444–589 (LTDSQRDEFE…GLRATFLRSR (146 aa)) folds into the CID domain. Residues 638-672 (LMNRPISELERRCRHNGLSLLGGREMMVARLVCLK) enclose the SAP domain. Disordered stretches follow at residues 752 to 797 (REDD…PENE) and 846 to 947 (GLSG…RGMR). Composition is skewed to basic and acidic residues over residues 854 to 876 (LPEKREKREDSRDSSRKRNRSES), 888 to 916 (LTRERVRDHDLDKDRHRDRDRQQHDLDKD), and 924 to 947 (SSRERDDHDRSRERDRDWRRRGMR).

In terms of tissue distribution, expressed in leaves, inflorescence stems, roots, flower buds, open flowers and siliques.

Its function is as follows. Probable SR-like splicing factor. In Arabidopsis thaliana (Mouse-ear cress), this protein is Protein RRC1-like.